The sequence spans 215 residues: Cytidylate kinase (215 aa).

10–18 (GPAAAGKST) is an ATP binding site.

This sequence belongs to the cytidylate kinase family. Type 1 subfamily.

Its subcellular location is the cytoplasm. It catalyses the reaction CMP + ATP = CDP + ADP. It carries out the reaction dCMP + ATP = dCDP + ADP. The protein is Cytidylate kinase of Staphylococcus epidermidis (strain ATCC 35984 / DSM 28319 / BCRC 17069 / CCUG 31568 / BM 3577 / RP62A).